Reading from the N-terminus, the 388-residue chain is Na(+)/H(+) antiporter NhaA (388 aa).

Helical transmembrane passes span 8–28, 57–77, 93–113, 123–143, 152–172, 175–195, 210–230, 254–274, 278–298, 328–348, and 361–381; these read FFSA…LGLL, LAEF…IAEI, ILPL…YGLI, GWAI…LALG, VWLM…IALF, SHLN…MIGL, GVVL…AGVI, IIAP…SMGM, AMSF…GLFL, LFGL…IAEL, and YGIL…LRFL.

The protein belongs to the NhaA Na(+)/H(+) (TC 2.A.33) antiporter family.

The protein localises to the cell inner membrane. The catalysed reaction is Na(+)(in) + 2 H(+)(out) = Na(+)(out) + 2 H(+)(in). Its function is as follows. Na(+)/H(+) antiporter that extrudes sodium in exchange for external protons. The sequence is that of Na(+)/H(+) antiporter NhaA from Zymomonas mobilis subsp. mobilis (strain ATCC 31821 / ZM4 / CP4).